The chain runs to 345 residues: MKDDKEKALSAALAQIERQFGKGSIMKLGDNTTMDVETISTGSLGLDIALGAGGLPMGRVVEIYGPESSGKTTLTLEVIAEAQRNGKVCAFIDAEHALDPVYAEKLGVNIDELLISQPDTGEQALEIVDMLTRSGAIDVIVVDSVAALTPKAEIEGDMGDSHMGLQARMLSQAMRKLTGNLKKSNTMLIFINQIRMKIGVMFGSPETTTGGNALKFYASVRLDIRRIGAVKNGDEIVGNETRVKVVKNKIAPPFKQAEFQILYGEGINNLGELIELGVKHEFVEKAGAWYSCNGERIGQGKANAAKYLDEHPEMAKDVDTKLRDMFLSKTVVAEDKSEVKEKEKA.

65 to 72 provides a ligand contact to ATP; sequence GPESSGKT.

Belongs to the RecA family.

The protein resides in the cytoplasm. Can catalyze the hydrolysis of ATP in the presence of single-stranded DNA, the ATP-dependent uptake of single-stranded DNA by duplex DNA, and the ATP-dependent hybridization of homologous single-stranded DNAs. It interacts with LexA causing its activation and leading to its autocatalytic cleavage. The polypeptide is Protein RecA (Colwellia psychrerythraea (strain 34H / ATCC BAA-681) (Vibrio psychroerythus)).